The primary structure comprises 297 residues: Protein muscleblind (297 aa).

2 consecutive C3H1-type zinc fingers follow at residues Trp18–Ala46 and Asn52–Gln80.

Belongs to the muscleblind family. In terms of tissue distribution, expressed in embryonic muscle cells.

Its subcellular location is the nucleus. Its function is as follows. Required for terminal differentiation of photoreceptor cells. Vital for embryonic development. This chain is Protein muscleblind (mbl), found in Drosophila melanogaster (Fruit fly).